The chain runs to 263 residues: 3-methyl-2-oxobutanoate hydroxymethyltransferase (263 aa).

Mg(2+) is bound by residues Asp43 and Asp82. 3-methyl-2-oxobutanoate contacts are provided by residues 43–44 (DS), Asp82, and Lys111. Glu113 lines the Mg(2+) pocket. The Proton acceptor role is filled by Glu179.

Belongs to the PanB family. In terms of assembly, homodecamer; pentamer of dimers. Mg(2+) serves as cofactor.

The protein resides in the cytoplasm. It carries out the reaction 3-methyl-2-oxobutanoate + (6R)-5,10-methylene-5,6,7,8-tetrahydrofolate + H2O = 2-dehydropantoate + (6S)-5,6,7,8-tetrahydrofolate. The protein operates within cofactor biosynthesis; (R)-pantothenate biosynthesis; (R)-pantoate from 3-methyl-2-oxobutanoate: step 1/2. In terms of biological role, catalyzes the reversible reaction in which hydroxymethyl group from 5,10-methylenetetrahydrofolate is transferred onto alpha-ketoisovalerate to form ketopantoate. The sequence is that of 3-methyl-2-oxobutanoate hydroxymethyltransferase from Neisseria meningitidis serogroup B (strain ATCC BAA-335 / MC58).